Reading from the N-terminus, the 443-residue chain is Exodeoxyribonuclease 7 large subunit (443 aa).

The protein belongs to the XseA family. As to quaternary structure, heterooligomer composed of large and small subunits.

It localises to the cytoplasm. The catalysed reaction is Exonucleolytic cleavage in either 5'- to 3'- or 3'- to 5'-direction to yield nucleoside 5'-phosphates.. In terms of biological role, bidirectionally degrades single-stranded DNA into large acid-insoluble oligonucleotides, which are then degraded further into small acid-soluble oligonucleotides. The sequence is that of Exodeoxyribonuclease 7 large subunit from Legionella pneumophila (strain Paris).